The following is a 185-amino-acid chain: UPF0669 protein C6orf120 homolog (185 aa).

A signal peptide spans 1–23 (MATPWRCALLMILASQVVILVKC). Asn-47 carries N-linked (GlcNAc...) asparagine glycosylation.

The protein belongs to the UPF0669 family.

It localises to the secreted. May be involved in induction of apoptosis in CD4(+) T-cells, but not CD8(+) T-cells or hepatocytes. This chain is UPF0669 protein C6orf120 homolog, found in Rattus norvegicus (Rat).